The sequence spans 93 residues: Beta-defensin 128 (93 aa).

The first 18 residues, 1–18 (MKLFLVLIILLFEVLTDG), serve as a signal peptide directing secretion. Intrachain disulfides connect cysteine 24–cysteine 52, cysteine 32–cysteine 46, and cysteine 36–cysteine 53.

It belongs to the beta-defensin family.

It localises to the secreted. Functionally, has antibacterial activity. The polypeptide is Beta-defensin 128 (DEFB128) (Macaca fascicularis (Crab-eating macaque)).